We begin with the raw amino-acid sequence, 181 residues long: MRCPFCRHPDSRVVDSREAEEGSAIRRRRSCLSCGRRFTTMEEASLQVRKRSGAAEPFSRAKVIAGVRKACQGRPVRDDDLALLAQRVEDAVRSSGSAEVPAEAIGRAILGPLRELDEVAYLRFASVYLAFESLTDFESAIAALRSEAAGPPTTRDGPARPVPRGAVDVSPVIGTQQVHSR.

Residues 3–34 fold into a zinc finger; sequence CPFCRHPDSRVVDSREAEEGSAIRRRRSCLSC. One can recognise an ATP-cone domain in the interval 46–136; that stretch reads LQVRKRSGAA…VYLAFESLTD (91 aa). A disordered region spans residues 148–181; sequence AAGPPTTRDGPARPVPRGAVDVSPVIGTQQVHSR.

Belongs to the NrdR family. Requires Zn(2+) as cofactor.

Functionally, negatively regulates transcription of bacterial ribonucleotide reductase nrd genes and operons by binding to NrdR-boxes. This is Transcriptional repressor NrdR from Frankia casuarinae (strain DSM 45818 / CECT 9043 / HFP020203 / CcI3).